A 159-amino-acid polypeptide reads, in one-letter code: Phosphopantetheine adenylyltransferase (159 aa).

Substrate is bound at residue Thr-10. Residues Thr-10–Phe-11 and His-18 each bind ATP. Substrate is bound by residues Lys-42, Met-74, and Arg-88. ATP is bound by residues Gly-89 to Arg-91, Glu-99, and Trp-124 to Ser-130.

The protein belongs to the bacterial CoaD family. As to quaternary structure, homohexamer. Requires Mg(2+) as cofactor.

The protein localises to the cytoplasm. The catalysed reaction is (R)-4'-phosphopantetheine + ATP + H(+) = 3'-dephospho-CoA + diphosphate. The protein operates within cofactor biosynthesis; coenzyme A biosynthesis; CoA from (R)-pantothenate: step 4/5. In terms of biological role, reversibly transfers an adenylyl group from ATP to 4'-phosphopantetheine, yielding dephospho-CoA (dPCoA) and pyrophosphate. This is Phosphopantetheine adenylyltransferase from Salmonella choleraesuis (strain SC-B67).